Here is a 169-residue protein sequence, read N- to C-terminus: Mitochondrial ATP-independent inner membrane protease subunit 1b (169 aa).

Active-site residues include serine 47 and lysine 91.

This sequence belongs to the peptidase S26 family. IMP1 subfamily. In terms of assembly, heterodimer of 2 subunits, IMP1A/B and IMP12.

It is found in the mitochondrion inner membrane. Its function is as follows. Catalyzes the removal of transit peptides required for the targeting of proteins from the mitochondrial matrix, across the inner membrane, into the inter-membrane space. This is Mitochondrial ATP-independent inner membrane protease subunit 1b from Arabidopsis thaliana (Mouse-ear cress).